The chain runs to 757 residues: 5-methyltetrahydropteroyltriglutamate--homocysteine methyltransferase (757 aa).

5-methyltetrahydropteroyltri-L-glutamate-binding positions include 17 to 20 (RELK) and Lys117. Residues 434–436 (IGS) and Glu487 contribute to the L-homocysteine site. Residues 434-436 (IGS) and Glu487 contribute to the L-methionine site. Residues 518–519 (RC) and Trp564 contribute to the 5-methyltetrahydropteroyltri-L-glutamate site. Asp602 contributes to the L-homocysteine binding site. Residue Asp602 coordinates L-methionine. Glu608 is a 5-methyltetrahydropteroyltri-L-glutamate binding site. Positions 644, 646, and 668 each coordinate Zn(2+). The active-site Proton donor is His697. Cys729 is a binding site for Zn(2+).

Belongs to the vitamin-B12 independent methionine synthase family. Zn(2+) serves as cofactor.

The catalysed reaction is 5-methyltetrahydropteroyltri-L-glutamate + L-homocysteine = tetrahydropteroyltri-L-glutamate + L-methionine. The protein operates within amino-acid biosynthesis; L-methionine biosynthesis via de novo pathway; L-methionine from L-homocysteine (MetE route): step 1/1. In terms of biological role, catalyzes the transfer of a methyl group from 5-methyltetrahydrofolate to homocysteine resulting in methionine formation. This chain is 5-methyltetrahydropteroyltriglutamate--homocysteine methyltransferase, found in Proteus mirabilis (strain HI4320).